Consider the following 100-residue polypeptide: Large ribosomal subunit protein uL23 (100 aa).

The protein belongs to the universal ribosomal protein uL23 family. Part of the 50S ribosomal subunit. Contacts protein L29, and trigger factor when it is bound to the ribosome.

Functionally, one of the early assembly proteins it binds 23S rRNA. One of the proteins that surrounds the polypeptide exit tunnel on the outside of the ribosome. Forms the main docking site for trigger factor binding to the ribosome. The polypeptide is Large ribosomal subunit protein uL23 (Prochlorococcus marinus subsp. pastoris (strain CCMP1986 / NIES-2087 / MED4)).